The primary structure comprises 160 residues: Transcription elongation factor GreA (160 aa).

Residues Ala-53 to Asn-73 are a coiled coil.

Belongs to the GreA/GreB family.

Necessary for efficient RNA polymerase transcription elongation past template-encoded arresting sites. The arresting sites in DNA have the property of trapping a certain fraction of elongating RNA polymerases that pass through, resulting in locked ternary complexes. Cleavage of the nascent transcript by cleavage factors such as GreA or GreB allows the resumption of elongation from the new 3'terminus. GreA releases sequences of 2 to 3 nucleotides. The sequence is that of Transcription elongation factor GreA from Pseudomonas putida (strain ATCC 47054 / DSM 6125 / CFBP 8728 / NCIMB 11950 / KT2440).